The primary structure comprises 388 residues: Processive diacylglycerol beta-glucosyltransferase (388 aa).

The protein belongs to the glycosyltransferase 28 family. UgtP subfamily.

The protein localises to the cell membrane. It catalyses the reaction a 1,2-diacyl-3-O-(beta-D-glucopyranosyl)-sn-glycerol + UDP-alpha-D-glucose = a 1,2-diacyl-3-O-(beta-D-Glc-(1-&gt;6)-beta-D-Glc)-sn-glycerol + UDP + H(+). The catalysed reaction is a 1,2-diacyl-3-O-(beta-D-Glc-(1-&gt;6)-beta-D-Glc)-sn-glycerol + UDP-alpha-D-glucose = a 1,2-diacyl-3-O-(beta-D-Glc-(1-&gt;6)-beta-D-Glc-(1-&gt;6)-beta-D-Glc)-sn-glycerol + UDP + H(+). It carries out the reaction a 1,2-diacyl-sn-glycerol + UDP-alpha-D-glucose = a 1,2-diacyl-3-O-(beta-D-glucopyranosyl)-sn-glycerol + UDP + H(+). It functions in the pathway glycolipid metabolism; diglucosyl-diacylglycerol biosynthesis. Processive glucosyltransferase involved in the biosynthesis of both the bilayer- and non-bilayer-forming membrane glucolipids. Is able to successively transfer up to three glucosyl residues to diacylglycerol (DAG), thereby catalyzing the formation of beta-monoglucosyl-DAG (3-O-(beta-D-glucopyranosyl)-1,2-diacyl-sn-glycerol), beta-diglucosyl-DAG (3-O-(beta-D-glucopyranosyl-beta-(1-&gt;6)-D-glucopyranosyl)-1,2-diacyl-sn-glycerol) and beta-triglucosyl-DAG (3-O-(beta-D-glucopyranosyl-beta-(1-&gt;6)-D-glucopyranosyl-beta-(1-&gt;6)-D-glucopyranosyl)-1,2-diacyl-sn-glycerol). Beta-diglucosyl-DAG is the predominant glycolipid found in Bacillales and is also used as a membrane anchor for lipoteichoic acid (LTA). The polypeptide is Processive diacylglycerol beta-glucosyltransferase (Bacillus cereus (strain ATCC 10987 / NRS 248)).